The primary structure comprises 218 residues: Hypoxanthine-guanine phosphoribosyltransferase (218 aa).

GMP-binding positions include K69, 134 to 142, K166, 186 to 188, and D194; these read EDIIDTGKT and KFV. Catalysis depends on D138, which acts as the Proton acceptor. Position 194 (D194) interacts with Mg(2+).

This sequence belongs to the purine/pyrimidine phosphoribosyltransferase family. Homotetramer. It depends on Mg(2+) as a cofactor.

It is found in the cytoplasm. It carries out the reaction IMP + diphosphate = hypoxanthine + 5-phospho-alpha-D-ribose 1-diphosphate. The enzyme catalyses GMP + diphosphate = guanine + 5-phospho-alpha-D-ribose 1-diphosphate. Its pathway is purine metabolism; IMP biosynthesis via salvage pathway; IMP from hypoxanthine: step 1/1. Functionally, converts guanine to guanosine monophosphate, and hypoxanthine to inosine monophosphate. Transfers the 5-phosphoribosyl group from 5-phosphoribosylpyrophosphate onto the purine. Plays a central role in the generation of purine nucleotides through the purine salvage pathway. The chain is Hypoxanthine-guanine phosphoribosyltransferase (HPRT1) from Gallus gallus (Chicken).